A 234-amino-acid polypeptide reads, in one-letter code: Glutamine synthetase (234 aa).

Residues 1 to 234 enclose the GS catalytic domain; that stretch reads KAQEPWFGIE…TRLLVETTLL (234 aa). The segment at 126–157 is disordered; it reads GSGGHVNFSNRQPESPPAGKQSRSSAKKLGKR.

It belongs to the glutamine synthetase family. Homooctamer.

The protein resides in the cytoplasm. It catalyses the reaction L-glutamate + NH4(+) + ATP = L-glutamine + ADP + phosphate + H(+). This Dunaliella salina (Green alga) protein is Glutamine synthetase.